Here is a 369-residue protein sequence, read N- to C-terminus: MNTNYFIGLMSGTSMDGIDAVLVDFSSPSPKLVAKHSQVIPKHTLRNLQRLCLPGSDEINLLGQLDRSVGLLFGAAVNELLAKAGISKEQVVAIGSHGQTVRHMPNLDMGFTLQIGDPNTIAIETGINVIADFRRKDIALGGQGAPLVPAFHQQMFASPDTPRIILNIGGIANLTYLPGTNDDVIGFDTGPGNTLIDAWIQQVKDQAYDEDGAWAASGTTDEKLLKHLLSHTYFSQPFPKSTGRELFNQAWLEQQAAEFGYLNEADIQSTLLDVTCHSIAKDTLALSLRGELFVCGGGAFNTELMSRLDKLLPGYKLSTTSDLGIAPQWVEGIAFAWLAMRHHQGLSGNLPAVTGASREAVLGSLFPAD.

Residue 12–19 (GTSMDGID) coordinates ATP.

This sequence belongs to the anhydro-N-acetylmuramic acid kinase family.

It catalyses the reaction 1,6-anhydro-N-acetyl-beta-muramate + ATP + H2O = N-acetyl-D-muramate 6-phosphate + ADP + H(+). The protein operates within amino-sugar metabolism; 1,6-anhydro-N-acetylmuramate degradation. It functions in the pathway cell wall biogenesis; peptidoglycan recycling. In terms of biological role, catalyzes the specific phosphorylation of 1,6-anhydro-N-acetylmuramic acid (anhMurNAc) with the simultaneous cleavage of the 1,6-anhydro ring, generating MurNAc-6-P. Is required for the utilization of anhMurNAc either imported from the medium or derived from its own cell wall murein, and thus plays a role in cell wall recycling. The polypeptide is Anhydro-N-acetylmuramic acid kinase (Shewanella sediminis (strain HAW-EB3)).